The primary structure comprises 341 residues: Cysteine-rich repeat secretory protein 1 (341 aa).

Positions methionine 1 to alanine 25 are cleaved as a signal peptide. Gnk2-homologous domains are found at residues threonine 28–isoleucine 131 and aspartate 136–leucine 245. Cystine bridges form between cysteine 85-cysteine 94, cysteine 97-cysteine 122, cysteine 199-cysteine 208, and cysteine 211-cysteine 236. Positions proline 247–glutamine 262 are enriched in pro residues. A disordered region spans residues proline 247–aspartate 274.

The protein belongs to the cysteine-rich repeat secretory protein family.

The protein resides in the secreted. In Arabidopsis thaliana (Mouse-ear cress), this protein is Cysteine-rich repeat secretory protein 1 (CRRSP1).